The chain runs to 232 residues: LexA repressor (232 aa).

The segment at residues 35 to 55 (IREIGDAAGLQSTSSVAYQLK) is a DNA-binding region (H-T-H motif). Basic and acidic residues predominate over residues 61-85 (GFLRRDPNKPRAVDVRHLPETESRS). Residues 61–104 (GFLRRDPNKPRAVDVRHLPETESRSSKAATQAKSKAPQAGVHDP) form a disordered region. A compositionally biased stretch (low complexity) spans 86-99 (SKAATQAKSKAPQA). Catalysis depends on for autocatalytic cleavage activity residues Ser156 and Lys193.

Belongs to the peptidase S24 family. In terms of assembly, homodimer.

The catalysed reaction is Hydrolysis of Ala-|-Gly bond in repressor LexA.. Its function is as follows. Represses a number of genes involved in the response to DNA damage (SOS response), including recA and lexA. In the presence of single-stranded DNA, RecA interacts with LexA causing an autocatalytic cleavage which disrupts the DNA-binding part of LexA, leading to derepression of the SOS regulon and eventually DNA repair. The chain is LexA repressor from Corynebacterium glutamicum (strain ATCC 13032 / DSM 20300 / JCM 1318 / BCRC 11384 / CCUG 27702 / LMG 3730 / NBRC 12168 / NCIMB 10025 / NRRL B-2784 / 534).